Consider the following 370-residue polypeptide: Putative agmatine deiminase (370 aa).

Polar residues predominate over residues 1–19 (MTNMNVDATQLTTKPSQDG). Positions 1–20 (MTNMNVDATQLTTKPSQDGF) are disordered. The Amidino-cysteine intermediate role is filled by C361.

The protein belongs to the agmatine deiminase family.

It catalyses the reaction agmatine + H2O = N-carbamoylputrescine + NH4(+). This Shewanella frigidimarina (strain NCIMB 400) protein is Putative agmatine deiminase.